The chain runs to 368 residues: Histidinol-phosphate aminotransferase 1 (368 aa).

Residue K224 is modified to N6-(pyridoxal phosphate)lysine.

It belongs to the class-II pyridoxal-phosphate-dependent aminotransferase family. Histidinol-phosphate aminotransferase subfamily. In terms of assembly, homodimer. The cofactor is pyridoxal 5'-phosphate.

The enzyme catalyses L-histidinol phosphate + 2-oxoglutarate = 3-(imidazol-4-yl)-2-oxopropyl phosphate + L-glutamate. It functions in the pathway amino-acid biosynthesis; L-histidine biosynthesis; L-histidine from 5-phospho-alpha-D-ribose 1-diphosphate: step 7/9. The chain is Histidinol-phosphate aminotransferase 1 (hisC1) from Rhizobium meliloti (strain 1021) (Ensifer meliloti).